A 581-amino-acid polypeptide reads, in one-letter code: DEAD-box ATP-dependent RNA helicase 22 (581 aa).

Positions 80 to 108 (VSWKSLGLSDNVSIALRDSGFDRPSLTQA) match the Q motif motif. The Helicase ATP-binding domain occupies 111–380 (IPSILSGKDV…GGILKHMFQD (270 aa)). 124-131 (AETGSGKT) serves as a coordination point for ATP. The short motif at 244–247 (DEAD) is the DEAD box element. Positions 408–566 (QVDALIEAVK…GFRNKVKKRA (159 aa)) constitute a Helicase C-terminal domain.

It belongs to the DEAD box helicase family.

The enzyme catalyses ATP + H2O = ADP + phosphate + H(+). The protein is DEAD-box ATP-dependent RNA helicase 22 (RH22) of Arabidopsis thaliana (Mouse-ear cress).